A 217-amino-acid polypeptide reads, in one-letter code: Probable cytidylate kinase (217 aa).

9-17 serves as a coordination point for ATP; that stretch reads GPAGSGKST.

The protein belongs to the cytidylate kinase family. Type 1 subfamily.

The catalysed reaction is CMP + ATP = CDP + ADP. It carries out the reaction dCMP + ATP = dCDP + ADP. The polypeptide is Probable cytidylate kinase (Vairimorpha ceranae (strain BRL01) (Microsporidian parasite)).